Consider the following 592-residue polypeptide: Bifunctional purine biosynthesis protein ATIC (592 aa).

N-acetylmethionine is present on methionine 1. Residues 2–146 form the MGS-like domain; it reads APGQLALFSV…KNHARVTVVC (145 aa). Residues 2–198 are IMP cyclohydrolase; that stretch reads APGQLALFSV…ISDYFRKQYS (197 aa). Residues 12-14, 34-37, 64-67, 101-102, and 125-126 contribute to the IMP site; these read SDK, SGGT, RVKT, CN, and DI. Residue lysine 137 is the Proton donor/acceptor; for FAICAR cyclization activity of the active site. Lysine 199 is subject to N6-acetyllysine. The interval 199–592 is AICAR formyltransferase; that stretch reads KGVSQMPLRY…AHTNLRLFHH (394 aa). 5-amino-1-(5-phospho-beta-D-ribosyl)imidazole-4-carboxamide-binding positions include 207 to 208, histidine 267, glycine 316, aspartate 339, asparagine 431, and arginine 451; that span reads RY. Histidine 267 functions as the Proton acceptor; for AICAR formyltransferase activity in the catalytic mechanism. A (6R)-10-formyltetrahydrofolate-binding site is contributed by isoleucine 452. Phenylalanine 541 serves as a coordination point for 5-amino-1-(5-phospho-beta-D-ribosyl)imidazole-4-carboxamide. Residues aspartate 546 and 565–566 each bind (6R)-10-formyltetrahydrofolate; that span reads SA. Arginine 588 is a 5-amino-1-(5-phospho-beta-D-ribosyl)imidazole-4-carboxamide binding site.

This sequence belongs to the PurH family. As to quaternary structure, homodimer. Associates with internalized INSR complexes on Golgi/endosomal membranes. Interacts with INSR; ATIC together with PRKAA2/AMPK2 and HACD3/PTPLAD1 is proposed to be part of a signaling network regulating INSR autophosphorylation and endocytosis. In terms of tissue distribution, present in the heart, brain, placenta, lung, liver, skeletal muscle, kidney, pancreas.

Its subcellular location is the cytoplasm. The protein localises to the cytosol. The enzyme catalyses (6R)-10-formyltetrahydrofolate + 5-amino-1-(5-phospho-beta-D-ribosyl)imidazole-4-carboxamide = 5-formamido-1-(5-phospho-D-ribosyl)imidazole-4-carboxamide + (6S)-5,6,7,8-tetrahydrofolate. It catalyses the reaction 10-formyldihydrofolate + 5-amino-1-(5-phospho-beta-D-ribosyl)imidazole-4-carboxamide = 5-formamido-1-(5-phospho-D-ribosyl)imidazole-4-carboxamide + 7,8-dihydrofolate. It carries out the reaction IMP + H2O = 5-formamido-1-(5-phospho-D-ribosyl)imidazole-4-carboxamide. The catalysed reaction is 5-amino-1-(5-phospho-D-ribosyl)imidazole-4-thiocarboxamide + 10-formyldihydrofolate = 6-thio-IMP + 7,8-dihydrofolate + H2O. Its pathway is purine metabolism; IMP biosynthesis via de novo pathway; 5-formamido-1-(5-phospho-D-ribosyl)imidazole-4-carboxamide from 5-amino-1-(5-phospho-D-ribosyl)imidazole-4-carboxamide (10-formyl THF route): step 1/1. It functions in the pathway purine metabolism; IMP biosynthesis via de novo pathway; IMP from 5-formamido-1-(5-phospho-D-ribosyl)imidazole-4-carboxamide: step 1/1. Its activity is regulated as follows. AMP and XMP inhibit AICAR formyltransferase activity. AICAR formyltransferase activity is inhibited by N-(6-fluoro-1-oxo-1,2-dihydroisoquinolin-7-yl)-5- [(3R)-3-hydroxypyrrolidin-1-yl]thiophene-2-sulfonamide (LSN 3213128), which acts as a tumor suppression in cancer cell lines. Bifunctional enzyme that catalyzes the last two steps of purine biosynthesis. Acts as a transformylase that incorporates a formyl group to the AMP analog AICAR (5-amino-1-(5-phospho-beta-D-ribosyl)imidazole-4-carboxamide) to produce the intermediate formyl-AICAR (FAICAR). Can use both 10-formyldihydrofolate and 10-formyltetrahydrofolate as the formyl donor in this reaction. Also catalyzes the cyclization of FAICAR to inosine monophosphate (IMP). Is able to convert thio-AICAR to 6-mercaptopurine ribonucleotide, an inhibitor of purine biosynthesis used in the treatment of human leukemias. Promotes insulin receptor/INSR autophosphorylation and is involved in INSR internalization. The chain is Bifunctional purine biosynthesis protein ATIC from Homo sapiens (Human).